Consider the following 170-residue polypeptide: MSKAAKKKSSKKRSGSEAAQFDQKTIQEFKEAFGIMDQNKDGIIDKSDLKDLYASMGQIAPDSQIDAMIKEASGPINFTVFLTLFGERLTGTDPEATIIGAFAMFDKKDCGKIKEDDLIKILQNKRGEPLDEDEVKAMYKGKPPIEGGEVDYKAFAHLITTGAQDELASA.

Over residues 1-13 (MSKAAKKKSSKKR) the composition is skewed to basic residues. Residues 1 to 22 (MSKAAKKKSSKKRSGSEAAQFD) are disordered. EF-hand domains lie at 24 to 59 (KTIQ…MGQI) and 93 to 128 (DPEA…KRGE). Ca(2+)-binding residues include D37, N39, D41, and D48.

As to quaternary structure, myosin is a hexamer of 2 heavy chains and 4 light chains (two regulatory light chains and two essential light chains).

This is Myosin regulatory light chain 1 (mlc-1) from Caenorhabditis elegans.